The chain runs to 474 residues: Mercuric reductase (474 aa).

FAD is bound by residues Ala-19, Gly-39, and Thr-44. A disulfide bond links Cys-45 and Cys-50. Positions 54, 119, 315, and 323 each coordinate FAD. Residues Cys-471 and Cys-472 each coordinate Hg(2+).

The protein belongs to the class-I pyridine nucleotide-disulfide oxidoreductase family. Homodimer. The cofactor is FAD.

The catalysed reaction is Hg + NADP(+) + H(+) = Hg(2+) + NADPH. Resistance to Hg(2+) in bacteria appears to be governed by a specialized system which includes mercuric reductase. MerA protein is responsible for volatilizing mercury as Hg(0). This is Mercuric reductase (merA) from Streptomyces lividans.